We begin with the raw amino-acid sequence, 412 residues long: FAD-dependent monooxygenase nscC (412 aa).

The N-terminal stretch at 1 to 21 is a signal peptide; the sequence is MGKQQETILIIGAGIAGLTTS. FAD is bound by residues Glu35 and Ala46. Asn92 is a glycosylation site (N-linked (GlcNAc...) asparagine). Arg119 contacts FAD. 2 N-linked (GlcNAc...) asparagine glycosylation sites follow: Asn170 and Asn231. Residues Asp326 and Gly339 each contribute to the FAD site.

It belongs to the paxM FAD-dependent monooxygenase family. It depends on FAD as a cofactor.

The protein operates within secondary metabolite biosynthesis. Functionally, FAD-dependent monooxygenase; part of the gene cluster that mediates the biosynthesis of neosartoricin B, a prenylated anthracenone that probably exhibits T-cell antiproliferative activity, suggestive of a physiological role as an immunosuppressive agent. The non-reducing polyketide synthase nscA probably synthesizes and cyclizes the decaketide backbone. The hydrolase nscB then mediates the product release through hydrolysis followed by spontaneous decarboxylation. The prenyltransferase nscD catalyzes the addition of the dimethylallyl group to the aromatic C5. The FAD-dependent monooxygenase nscC is then responsible for the stereospecific hydroxylation at C2. Neosartoricin B can be converted into two additional compounds neosartoricins C and D. Neosartoricin C is a spirocyclic compound that is cyclized through the attack of C3 hydroxyl on C14, followed by dehydration. On the other hand, neosartoricin D is a further cyclized compound in which attack of C2 on C14 in neosartoricin C results in the formation of the acetal-containing dioxabicyclo-octanone ring. Both of these compounds are novel and possibly represent related metabolites of the gene cluster. The chain is FAD-dependent monooxygenase nscC from Trichophyton verrucosum (strain HKI 0517).